The primary structure comprises 74 residues: High-potential iron-sulfur protein isozyme 2 (74 aa).

Positions 36, 39, 53, and 67 each coordinate [4Fe-4S] cluster.

Homodimer.

Functionally, specific class of high-redox-potential 4Fe-4S ferredoxins. Functions in anaerobic electron transport in most purple and in some other photosynthetic bacteria and in at least one genus (Paracoccus) of halophilic, denitrifying bacteria. This Ectothiorhodospira mobilis protein is High-potential iron-sulfur protein isozyme 2.